The chain runs to 312 residues: Serine protease 48 (312 aa).

An N-terminal signal peptide occupies residues 1–22 (MGPAGLKVLLLLFLGAFQGSFT). Residues 40–276 (IVGGQDAALG…YQKWISAIIS (237 aa)) form the Peptidase S1 domain. A disulfide bond links Cys65 and Cys81. Active-site charge relay system residues include His80 and Asp126. A glycan (N-linked (GlcNAc...) asparagine) is linked at Asn149. Intrachain disulfides connect Cys160–Cys235, Cys190–Cys214, and Cys225–Cys253. Catalysis depends on Ser229, which acts as the Charge relay system. Asn263 carries an N-linked (GlcNAc...) asparagine glycan.

This sequence belongs to the peptidase S1 family.

Its subcellular location is the secreted. This chain is Serine protease 48 (Prss48), found in Mus musculus (Mouse).